Reading from the N-terminus, the 72-residue chain is Protein kish-A (72 aa).

An N-terminal signal peptide occupies residues 1–26 (MSAIFNFQSLLTVILLLICTCAYIRS). Topologically, residues 27-53 (LAPSLLDKNKTGLLGIFWKCARIGERK) are extracellular. N-linked (GlcNAc...) asparagine glycosylation occurs at N35. Residues 54-71 (SPYVAVCCVVMAFSILFV) form a helical membrane-spanning segment. Position 72 (Q72) is a topological domain, cytoplasmic.

This sequence belongs to the KISH family.

It is found in the golgi apparatus membrane. Its function is as follows. Involved in the early part of the secretory pathway. This chain is Protein kish-A (TMEM167A), found in Gallus gallus (Chicken).